The primary structure comprises 411 residues: Phosphopentomutase (411 aa).

Mn(2+)-binding residues include Asp-14, Asp-306, His-311, Asp-347, His-348, and His-359.

The protein belongs to the phosphopentomutase family. The cofactor is Mn(2+).

It localises to the cytoplasm. The catalysed reaction is 2-deoxy-alpha-D-ribose 1-phosphate = 2-deoxy-D-ribose 5-phosphate. The enzyme catalyses alpha-D-ribose 1-phosphate = D-ribose 5-phosphate. It participates in carbohydrate degradation; 2-deoxy-D-ribose 1-phosphate degradation; D-glyceraldehyde 3-phosphate and acetaldehyde from 2-deoxy-alpha-D-ribose 1-phosphate: step 1/2. Its function is as follows. Isomerase that catalyzes the conversion of deoxy-ribose 1-phosphate (dRib-1-P) and ribose 1-phosphate (Rib-1-P) to deoxy-ribose 5-phosphate (dRib-5-P) and ribose 5-phosphate (Rib-5-P), respectively. The polypeptide is Phosphopentomutase (Lactococcus lactis subsp. cremoris (strain SK11)).